The sequence spans 677 residues: uncharacterized protein (677 aa).

The next 3 helical transmembrane spans lie at isoleucine 80 to phenylalanine 102, alanine 338 to phenylalanine 360, and leucine 367 to leucine 386. Residues aspartate 523–arginine 556 are disordered. Residues serine 533–serine 546 show a composition bias toward acidic residues.

It localises to the cell membrane. This is an uncharacterized protein from Treponema pallidum (strain Nichols).